The primary structure comprises 1093 residues: Non-canonical non-ribosomal peptide synthetase ascB (1093 aa).

Low complexity predominate over residues 1–26 (MTVNGHHTNGVNGANGTNGHANGSNG). The tract at residues 1–27 (MTVNGHHTNGVNGANGTNGHANGSNGI) is disordered. The adenylation (A) domain stretch occupies residues 35–392 (EIVPFVKPQV…LSLTFAPTDN (358 aa)). The Carrier domain occupies 591–678 (DNLEQNLKSL…EIAAALTKGS (88 aa)). An O-(pantetheine 4'-phosphoryl)serine modification is found at Ser-627. A thioester reductase (TR) domain region spans residues 721 to 971 (LTGATGSLGS…IPVDDAASTV (251 aa)).

It belongs to the NRP synthetase family.

It catalyses the reaction ilicicolinate B + AH2 + ATP = ilicicolin B + A + AMP + diphosphate. It functions in the pathway secondary metabolite biosynthesis; terpenoid biosynthesis. Its function is as follows. Non-canonical non-ribosomal peptide synthetase; part of the asc-1 gene cluster that mediates the biosynthesis of both ascochlorin and ascofuranone, a strong inhibitor of cyanide-insensitive alternative oxidases and a promising drug candidate against African trypanosomiasis. The first step in the pathway is performed by the non-reducing polyketide synthase ascC that produces orsellinic acid by condensing acetyl-CoA with 3 malonyl-CoA units. Orsellinic acid is then prenylated by the prenyltransferase ascA to yield ilicicolinic acid B. Ilicicolinic acid B is further reduced to ilicicolin B by the reductase ascB. The halogenase ascD then chlorinates ilicicolin B to produce ilicicolin A which is converted to ilicicolin A epoxide by the cytochrome P450 monooxygenase ascE that catalyzes stereoselective epoxidation of the terminal double bond of the prenyl group. Ilicicolin A epoxide is the last common precursor for the biosynthesis of ascofuranone and ascochlorin. The terpene cyclase ascF produces a monocyclic terpene, and the cyclization reaction is proposed to be initiated by protonation of the terminal epoxide of ilicicolin A epoxide to generate a monocyclic tertiarycation, which is followed by a series of hydride and methyl shifts with abstraction of proton, leading to the formation of the (14S,15R,19R)-trimethylcyclohexanone ring structure of ilicicolin C, which is finally reduced to ascochlorin by the dehydrogenase ascG. On the other hand, ilicicolin A epoxide is hydroxylated by the cytochrome P450 monooxygenase ascH, and the resultant product is cyclized by the terpene cyclase ascI to ascofuranol via protonation-initiated epoxide ring opening, which facilitates the 6-endo-tet cyclization to form the tetrahy-drofuran ring. Finally, ascofuranol is oxidized into ascofuranone by ascJ. This Acremonium egyptiacum (Oospora egyptiaca) protein is Non-canonical non-ribosomal peptide synthetase ascB.